The primary structure comprises 243 residues: MPTEIAPCDRLIVALDVPSVADAEVMIATLGDAVTFYKIGMELTYAGGLGLAERLAADGKQVFMDLKLHDIPNTVERATRQIAKLGVRFLTVHGFSQSMKAALAGAAGSPLELLAVTVMTSYDDADLATAGYAMTVKELVAHRAVQARDIGIHGLILSPEETQLVRPLVGPDMQLVTPGIRPAGSDVGDQKRIMTPALAIAGGADRLVVGRPVTGAADPAAAAEAIVADIATAVALVGKTNRS.

Substrate-binding positions include Asp-16, Lys-38, 65-74, Thr-120, Arg-181, Gln-190, Gly-210, and Arg-211; that span reads DLKLHDIPNT. Catalysis depends on Lys-67, which acts as the Proton donor.

Belongs to the OMP decarboxylase family. Type 1 subfamily. In terms of assembly, homodimer.

The catalysed reaction is orotidine 5'-phosphate + H(+) = UMP + CO2. The protein operates within pyrimidine metabolism; UMP biosynthesis via de novo pathway; UMP from orotate: step 2/2. Functionally, catalyzes the decarboxylation of orotidine 5'-monophosphate (OMP) to uridine 5'-monophosphate (UMP). The polypeptide is Orotidine 5'-phosphate decarboxylase (Bradyrhizobium sp. (strain ORS 278)).